Here is a 640-residue protein sequence, read N- to C-terminus: DNA mismatch repair protein MutL (640 aa).

A disordered region spans residues 343–389 (TKNTATDQRAENLEVKPDSKEKELQPKESQHPRLVACDLPSGKIMPP). Basic and acidic residues predominate over residues 350–373 (QRAENLEVKPDSKEKELQPKESQH).

It belongs to the DNA mismatch repair MutL/HexB family.

Its function is as follows. This protein is involved in the repair of mismatches in DNA. It is required for dam-dependent methyl-directed DNA mismatch repair. May act as a 'molecular matchmaker', a protein that promotes the formation of a stable complex between two or more DNA-binding proteins in an ATP-dependent manner without itself being part of a final effector complex. This is DNA mismatch repair protein MutL from Desulforamulus reducens (strain ATCC BAA-1160 / DSM 100696 / MI-1) (Desulfotomaculum reducens).